The following is a 1295-amino-acid chain: DNA-directed RNA polymerase subunit beta' (1295 aa).

Zn(2+) is bound by residues cysteine 60, cysteine 62, cysteine 75, and cysteine 78. Mg(2+) contacts are provided by aspartate 516, aspartate 518, and aspartate 520. Zn(2+)-binding residues include cysteine 841, cysteine 914, cysteine 921, and cysteine 924.

Belongs to the RNA polymerase beta' chain family. The RNAP catalytic core consists of 2 alpha, 1 beta, 1 beta' and 1 omega subunit. When a sigma factor is associated with the core the holoenzyme is formed, which can initiate transcription. Requires Mg(2+) as cofactor. It depends on Zn(2+) as a cofactor.

The enzyme catalyses RNA(n) + a ribonucleoside 5'-triphosphate = RNA(n+1) + diphosphate. Functionally, DNA-dependent RNA polymerase catalyzes the transcription of DNA into RNA using the four ribonucleoside triphosphates as substrates. The chain is DNA-directed RNA polymerase subunit beta' from Dehalococcoides mccartyi (strain ATCC BAA-2100 / JCM 16839 / KCTC 5957 / BAV1).